A 317-amino-acid chain; its full sequence is Tenomodulin (317 aa).

The Cytoplasmic segment spans residues 1 to 30; sequence MAKNPPENCEGCHILNAEALKSKKICKSLK. Residues 31 to 50 form a helical; Signal-anchor for type II membrane protein membrane-spanning segment; it reads ICGLVFGILALTLIVLFWGS. Over 51–317 the chain is Extracellular; the sequence is KHFWPEVSKK…WWVARMLGRV (267 aa). Residues 93-186 form the BRICHOS domain; that stretch reads GNGTDETLEV…ICDNVTMYWI (94 aa). N-linked (GlcNAc...) asparagine glycosylation is present at Asn-94. An intrachain disulfide couples Cys-120 to Cys-178. The N-linked (GlcNAc...) asparagine glycan is linked to Asn-180. Ser-239 is modified (phosphoserine).

The protein belongs to the chondromodulin-1 family. As to expression, widely expressed with highest expression in tendons and ligaments, in the diaphragm, eye and skeletal muscle. Expressed in neuronal cells of all brain regions. Very low expression, if any, in glial cells.

The protein localises to the membrane. It localises to the nucleus envelope. In terms of biological role, may be an angiogenesis inhibitor. This chain is Tenomodulin (Tnmd), found in Mus musculus (Mouse).